The following is a 113-amino-acid chain: Pancreatic progenitor cell differentiation and proliferation factor A (113 aa).

The protein belongs to the PPDPF family.

Functionally, probable regulator of exocrine pancreas development. The chain is Pancreatic progenitor cell differentiation and proliferation factor A (ppdpf-a) from Xenopus laevis (African clawed frog).